The sequence spans 376 residues: Non-structural protein NS2 (376 aa).

Residues 163–188 (EEREKGAVEQPHKPAFKTERGMNRPD) show a composition bias toward basic and acidic residues. The segment at 163 to 201 (EEREKGAVEQPHKPAFKTERGMNRPDSDEDQNPAGGVVN) is disordered.

The protein belongs to the orbivirus non-structural protein NS2 family.

Single-stranded RNA-binding protein. The chain is Non-structural protein NS2 (Segment-8) from Antilocapra americana (Pronghorn).